Reading from the N-terminus, the 450-residue chain is Phosphoglucosamine mutase (450 aa).

The active-site Phosphoserine intermediate is Ser101. The Mg(2+) site is built by Ser101, Asp241, Asp243, and Asp245. At Ser101 the chain carries Phosphoserine.

The protein belongs to the phosphohexose mutase family. Mg(2+) is required as a cofactor. In terms of processing, activated by phosphorylation.

It catalyses the reaction alpha-D-glucosamine 1-phosphate = D-glucosamine 6-phosphate. In terms of biological role, catalyzes the conversion of glucosamine-6-phosphate to glucosamine-1-phosphate. This is Phosphoglucosamine mutase from Ligilactobacillus salivarius (strain UCC118) (Lactobacillus salivarius).